The chain runs to 96 residues: Large ribosomal subunit protein bL28 (96 aa).

Over residues 1–22 the composition is skewed to polar residues; sequence MSRSCELTGKGVQSGNNVSHAN. The tract at residues 1–24 is disordered; the sequence is MSRSCELTGKGVQSGNNVSHANNK.

This sequence belongs to the bacterial ribosomal protein bL28 family.

This is Large ribosomal subunit protein bL28 from Sinorhizobium medicae (strain WSM419) (Ensifer medicae).